The sequence spans 175 residues: MYLPKEKEIIQIKSYKHNGKLHRTWKKTVVLKSTENIIIGGNDHTLVVEADGRKWVTREPSICYFHSDYWFNVISMIREDGIYHYCNLGTPFAVDEQALKYIDYDLDIKVFPDGRFHLLDEGEYEQHRRQMKYPDSIDRILKTNVDVLSHWILDKKGPFSPDYIDIWYEKYKEYR.

The Proton donor role is filled by Arg23. Mg(2+)-binding residues include Asn87, Asp103, Asp105, Asp107, Asp120, and Glu123.

The protein belongs to the Ntdp family. Requires Mg(2+) as cofactor.

It catalyses the reaction a ribonucleoside 5'-triphosphate + H2O = a ribonucleoside 5'-diphosphate + phosphate + H(+). It carries out the reaction a ribonucleoside 5'-diphosphate + H2O = a ribonucleoside 5'-phosphate + phosphate + H(+). Has nucleoside phosphatase activity towards nucleoside triphosphates and nucleoside diphosphates. This is Nucleoside triphosphate/diphosphate phosphatase from Listeria innocua serovar 6a (strain ATCC BAA-680 / CLIP 11262).